A 302-amino-acid polypeptide reads, in one-letter code: 4-hydroxy-tetrahydrodipicolinate synthase (302 aa).

T55 contacts pyruvate. Y144 serves as the catalytic Proton donor/acceptor. K172 (schiff-base intermediate with substrate) is an active-site residue. Residue V214 participates in pyruvate binding.

The protein belongs to the DapA family. Homotetramer; dimer of dimers.

The protein resides in the cytoplasm. It catalyses the reaction L-aspartate 4-semialdehyde + pyruvate = (2S,4S)-4-hydroxy-2,3,4,5-tetrahydrodipicolinate + H2O + H(+). It functions in the pathway amino-acid biosynthesis; L-lysine biosynthesis via DAP pathway; (S)-tetrahydrodipicolinate from L-aspartate: step 3/4. Functionally, catalyzes the condensation of (S)-aspartate-beta-semialdehyde [(S)-ASA] and pyruvate to 4-hydroxy-tetrahydrodipicolinate (HTPA). In Prochlorococcus marinus (strain MIT 9303), this protein is 4-hydroxy-tetrahydrodipicolinate synthase.